The primary structure comprises 344 residues: tRNA N6-adenosine threonylcarbamoyltransferase (344 aa).

Positions 111 and 115 each coordinate Fe cation. Residues 133-137, aspartate 166, glycine 179, aspartate 183, and asparagine 270 contribute to the substrate site; that span reads VVSGG. Aspartate 298 contributes to the Fe cation binding site.

This sequence belongs to the KAE1 / TsaD family. Fe(2+) serves as cofactor.

The protein resides in the cytoplasm. The catalysed reaction is L-threonylcarbamoyladenylate + adenosine(37) in tRNA = N(6)-L-threonylcarbamoyladenosine(37) in tRNA + AMP + H(+). In terms of biological role, required for the formation of a threonylcarbamoyl group on adenosine at position 37 (t(6)A37) in tRNAs that read codons beginning with adenine. Is involved in the transfer of the threonylcarbamoyl moiety of threonylcarbamoyl-AMP (TC-AMP) to the N6 group of A37, together with TsaE and TsaB. TsaD likely plays a direct catalytic role in this reaction. This is tRNA N6-adenosine threonylcarbamoyltransferase from Persephonella marina (strain DSM 14350 / EX-H1).